The following is a 128-amino-acid chain: Sulfurtransferase TusD (128 aa).

C78 acts as the Cysteine persulfide intermediate in catalysis.

The protein belongs to the DsrE/TusD family. As to quaternary structure, heterohexamer, formed by a dimer of trimers. The hexameric TusBCD complex contains 2 copies each of TusB, TusC and TusD. The TusBCD complex interacts with TusE.

The protein resides in the cytoplasm. Functionally, part of a sulfur-relay system required for 2-thiolation of 5-methylaminomethyl-2-thiouridine (mnm(5)s(2)U) at tRNA wobble positions. Accepts sulfur from TusA and transfers it in turn to TusE. This is Sulfurtransferase TusD from Salmonella agona (strain SL483).